Here is an 87-residue protein sequence, read N- to C-terminus: Small ribosomal subunit protein bS20 (87 aa).

Positions 1–15 are enriched in basic residues; it reads MANTRSAKKMVRKIA. Disordered regions lie at residues 1-22 and 64-87; these read MANT…DVNK and KGVT…KAMA.

The protein belongs to the bacterial ribosomal protein bS20 family.

Functionally, binds directly to 16S ribosomal RNA. In Hyphomonas neptunium (strain ATCC 15444), this protein is Small ribosomal subunit protein bS20.